The primary structure comprises 157 residues: Arginine repressor (157 aa).

It belongs to the ArgR family.

The protein localises to the cytoplasm. It functions in the pathway amino-acid biosynthesis; L-arginine biosynthesis [regulation]. Its function is as follows. Regulates arginine biosynthesis genes. In Bacteroides fragilis (strain YCH46), this protein is Arginine repressor.